Consider the following 213-residue polypeptide: ATP-dependent Clp protease proteolytic subunit (213 aa).

Residue Ser-114 is the Nucleophile of the active site. The active site involves His-139.

This sequence belongs to the peptidase S14 family. Fourteen ClpP subunits assemble into 2 heptameric rings which stack back to back to give a disk-like structure with a central cavity, resembling the structure of eukaryotic proteasomes.

It is found in the cytoplasm. It carries out the reaction Hydrolysis of proteins to small peptides in the presence of ATP and magnesium. alpha-casein is the usual test substrate. In the absence of ATP, only oligopeptides shorter than five residues are hydrolyzed (such as succinyl-Leu-Tyr-|-NHMec, and Leu-Tyr-Leu-|-Tyr-Trp, in which cleavage of the -Tyr-|-Leu- and -Tyr-|-Trp bonds also occurs).. Functionally, cleaves peptides in various proteins in a process that requires ATP hydrolysis. Has a chymotrypsin-like activity. Plays a major role in the degradation of misfolded proteins. This chain is ATP-dependent Clp protease proteolytic subunit, found in Pseudomonas entomophila (strain L48).